The sequence spans 352 residues: Putative [LysW]-L-2-aminoadipate/[LysW]-L-glutamate phosphate reductase (352 aa).

NADP(+) contacts are provided by residues 10–13 and 34–36; these read SGFT and SRK. C151 is an active-site residue. N319 serves as a coordination point for NADP(+).

This sequence belongs to the NAGSA dehydrogenase family. Type 1 subfamily. LysY sub-subfamily.

Its subcellular location is the cytoplasm. It catalyses the reaction [amino-group carrier protein]-C-terminal-N-(1-carboxy-5-oxopentan-1-yl)-L-glutamine + phosphate + NADP(+) = [amino-group carrier protein]-C-terminal-N-(1-carboxy-5-phosphooxy-5-oxopentan-1-yl)-L-glutamine + NADPH + H(+). The enzyme catalyses [amino-group carrier protein]-C-terminal-gamma-(L-glutamyl-5-semialdehyde)-L-glutamate + phosphate + NADP(+) = [amino-group carrier protein]-C-terminal-gamma-(5-phospho-L-glutamyl)-L-glutamate + NADPH + H(+). The protein operates within amino-acid biosynthesis; L-lysine biosynthesis via AAA pathway; L-lysine from L-alpha-aminoadipate (Thermus route): step 3/5. It participates in amino-acid biosynthesis; L-arginine biosynthesis. Involved in both the arginine and lysine biosynthetic pathways. The chain is Putative [LysW]-L-2-aminoadipate/[LysW]-L-glutamate phosphate reductase from Pyrobaculum neutrophilum (strain DSM 2338 / JCM 9278 / NBRC 100436 / V24Sta) (Thermoproteus neutrophilus).